We begin with the raw amino-acid sequence, 488 residues long: Probable malate:quinone oxidoreductase (488 aa).

The protein belongs to the MQO family. FAD is required as a cofactor.

The enzyme catalyses (S)-malate + a quinone = a quinol + oxaloacetate. It functions in the pathway carbohydrate metabolism; tricarboxylic acid cycle; oxaloacetate from (S)-malate (quinone route): step 1/1. This Neisseria meningitidis serogroup C / serotype 2a (strain ATCC 700532 / DSM 15464 / FAM18) protein is Probable malate:quinone oxidoreductase.